The chain runs to 169 residues: Ribosome maturation factor RimM (169 aa).

A PRC barrel domain is found at Glu-97–Tyr-169.

This sequence belongs to the RimM family. As to quaternary structure, binds ribosomal protein uS19.

It localises to the cytoplasm. An accessory protein needed during the final step in the assembly of 30S ribosomal subunit, possibly for assembly of the head region. Essential for efficient processing of 16S rRNA. May be needed both before and after RbfA during the maturation of 16S rRNA. It has affinity for free ribosomal 30S subunits but not for 70S ribosomes. This Francisella tularensis subsp. tularensis (strain FSC 198) protein is Ribosome maturation factor RimM.